Consider the following 190-residue polypeptide: dCTP deaminase, dUMP-forming (190 aa).

DCTP is bound by residues 101–106, aspartate 119, 127–129, glutamine 148, tyrosine 162, and glutamine 174; these read KSSLGR and TLE. The Proton donor/acceptor role is filled by glutamate 129. The segment at 163-190 is disordered; sequence GSSQVGSKYQGQRGPTPSKSYQNFVKSN.

Belongs to the dCTP deaminase family. In terms of assembly, homotrimer.

The enzyme catalyses dCTP + 2 H2O = dUMP + NH4(+) + diphosphate. It functions in the pathway pyrimidine metabolism; dUMP biosynthesis; dUMP from dCTP: step 1/1. Bifunctional enzyme that catalyzes both the deamination of dCTP to dUTP and the hydrolysis of dUTP to dUMP without releasing the toxic dUTP intermediate. This is dCTP deaminase, dUMP-forming from Mycolicibacterium gilvum (strain PYR-GCK) (Mycobacterium gilvum (strain PYR-GCK)).